A 96-amino-acid polypeptide reads, in one-letter code: Aspartyl/glutamyl-tRNA(Asn/Gln) amidotransferase subunit C (96 aa).

Belongs to the GatC family. In terms of assembly, heterotrimer of A, B and C subunits.

It carries out the reaction L-glutamyl-tRNA(Gln) + L-glutamine + ATP + H2O = L-glutaminyl-tRNA(Gln) + L-glutamate + ADP + phosphate + H(+). The catalysed reaction is L-aspartyl-tRNA(Asn) + L-glutamine + ATP + H2O = L-asparaginyl-tRNA(Asn) + L-glutamate + ADP + phosphate + 2 H(+). In terms of biological role, allows the formation of correctly charged Asn-tRNA(Asn) or Gln-tRNA(Gln) through the transamidation of misacylated Asp-tRNA(Asn) or Glu-tRNA(Gln) in organisms which lack either or both of asparaginyl-tRNA or glutaminyl-tRNA synthetases. The reaction takes place in the presence of glutamine and ATP through an activated phospho-Asp-tRNA(Asn) or phospho-Glu-tRNA(Gln). In Fusobacterium nucleatum subsp. nucleatum (strain ATCC 25586 / DSM 15643 / BCRC 10681 / CIP 101130 / JCM 8532 / KCTC 2640 / LMG 13131 / VPI 4355), this protein is Aspartyl/glutamyl-tRNA(Asn/Gln) amidotransferase subunit C.